Here is a 122-residue protein sequence, read N- to C-terminus: Large ribosomal subunit protein bL12 (122 aa).

Belongs to the bacterial ribosomal protein bL12 family. In terms of assembly, homodimer. Part of the ribosomal stalk of the 50S ribosomal subunit. Forms a multimeric L10(L12)X complex, where L10 forms an elongated spine to which 2 to 4 L12 dimers bind in a sequential fashion. Binds GTP-bound translation factors.

In terms of biological role, forms part of the ribosomal stalk which helps the ribosome interact with GTP-bound translation factors. Is thus essential for accurate translation. This Staphylococcus saprophyticus subsp. saprophyticus (strain ATCC 15305 / DSM 20229 / NCIMB 8711 / NCTC 7292 / S-41) protein is Large ribosomal subunit protein bL12.